The chain runs to 103 residues: UPF0473 protein SGO_2040 (103 aa).

The protein belongs to the UPF0473 family.

This chain is UPF0473 protein SGO_2040, found in Streptococcus gordonii (strain Challis / ATCC 35105 / BCRC 15272 / CH1 / DL1 / V288).